The primary structure comprises 393 residues: MNVTTTRKDLMIVNMGPHHPSMHGVLRLILTLDGEDVIDCEPILGYLHRGMEKIAENRTVIQYLPYVTRWDYLATMFTEAITVNGPEQLGNIQVPKRASYIRVIMLELSRIASHLLWLGPFMADIGAQTPFFYIFRERELVYDLFEAATGMRMMHNYFRIGGVAADLPYGWIDKCLDFCDYFLTAVSEYQKLITRNPIFLERVEGVGIIGPEEAINWGLSGPMLRASGIQWDLRKVDHYECYDELDWEIFWQKEGDSLARYLVRIGEMRESIKIIQQALEGIPGGPYENLETRCFARERDPEWNDFEYRFISKKPSPTFELPKQELYVRVEAPKGELGIFLIGDQSGFPWRWKIRPPGFINLQILPQLVKRMKLADIMTILGSIDIIMGEVDR.

The protein belongs to the complex I 49 kDa subunit family. NDH is composed of at least 16 different subunits, 5 of which are encoded in the nucleus.

Its subcellular location is the plastid. The protein localises to the chloroplast thylakoid membrane. The enzyme catalyses a plastoquinone + NADH + (n+1) H(+)(in) = a plastoquinol + NAD(+) + n H(+)(out). It carries out the reaction a plastoquinone + NADPH + (n+1) H(+)(in) = a plastoquinol + NADP(+) + n H(+)(out). Its function is as follows. NDH shuttles electrons from NAD(P)H:plastoquinone, via FMN and iron-sulfur (Fe-S) centers, to quinones in the photosynthetic chain and possibly in a chloroplast respiratory chain. The immediate electron acceptor for the enzyme in this species is believed to be plastoquinone. Couples the redox reaction to proton translocation, and thus conserves the redox energy in a proton gradient. This chain is NAD(P)H-quinone oxidoreductase subunit H, chloroplastic, found in Eucalyptus globulus subsp. globulus (Tasmanian blue gum).